We begin with the raw amino-acid sequence, 404 residues long: Keratin, type I cuticular Ha3-II (404 aa).

A head region spans residues 1–56 (MPYNFCLPSLSCRTSCSSRPCVPPSCHGYTLPGACNIPANVSNCNWFCEGSFNGSE). The IF rod domain occupies 56–367 (EKETMQFLND…SLLESEDCKL (312 aa)). Positions 57–91 (KETMQFLNDRLASYLEKVRQLERDNAELENLIRER) are coil 1A. Residues 92–102 (SQQQEPLLCPS) are linker 1. Residues 103 to 203 (YQSYFKTIEE…HEQEVNTLRC (101 aa)) are coil 1B. Residues 204–219 (QLGDRLNVEVDAAPAV) form a linker 12 region. A coil 2 region spans residues 220 to 363 (DLNQVLNETR…NTYRSLLESE (144 aa)). Residues 364–404 (DCKLPSNPCATTNACEKPIGSCVTNPCGPRSRCGPCNTFGY) are tail.

Belongs to the intermediate filament family.

The protein is Keratin, type I cuticular Ha3-II (KRT33B) of Homo sapiens (Human).